Reading from the N-terminus, the 548-residue chain is Chaperonin GroEL (548 aa).

Residues 30–33 (TLGP), Lys-51, 87–91 (DGTTT), Gly-415, 479–481 (NAA), and Asp-495 each bind ATP. Residues 526-548 (REDKSSDVASSPAGGMGGMGGMM) are disordered. Residues 539–548 (GGMGGMGGMM) show a composition bias toward gly residues.

Belongs to the chaperonin (HSP60) family. In terms of assembly, forms a cylinder of 14 subunits composed of two heptameric rings stacked back-to-back. Interacts with the co-chaperonin GroES.

The protein localises to the cytoplasm. It catalyses the reaction ATP + H2O + a folded polypeptide = ADP + phosphate + an unfolded polypeptide.. Functionally, together with its co-chaperonin GroES, plays an essential role in assisting protein folding. The GroEL-GroES system forms a nano-cage that allows encapsulation of the non-native substrate proteins and provides a physical environment optimized to promote and accelerate protein folding. The polypeptide is Chaperonin GroEL (Buchnera aphidicola subsp. Schizaphis graminum (strain Sg)).